A 230-amino-acid polypeptide reads, in one-letter code: Dephospho-CoA kinase (230 aa).

Residues 3-206 (LVGLTGGIAS…EPLTWKERLR (204 aa)) enclose the DPCK domain. Residue 8–15 (GGIASGKS) participates in ATP binding.

Belongs to the CoaE family.

It carries out the reaction 3'-dephospho-CoA + ATP = ADP + CoA + H(+). It participates in cofactor biosynthesis; coenzyme A biosynthesis; CoA from (R)-pantothenate: step 5/5. Functionally, catalyzes the phosphorylation of the 3'-hydroxyl group of dephosphocoenzyme A to form coenzyme A. The protein is Dephospho-CoA kinase of Oryza sativa subsp. japonica (Rice).